The chain runs to 1930 residues: Transport and Golgi organization protein 1 homolog (1930 aa).

The signal sequence occupies residues 1-24; the sequence is MAAAPGLLFWLFVLGALWWVPGQS. The Lumenal segment spans residues 25-1171; sequence DLSHGRRFSD…EPAAVPPLES (1147 aa). The SH3 domain occupies 45-107; sequence MLMYRGKALE…PKDLIKVLHK (63 aa). Disordered stretches follow at residues 144–263, 317–496, 547–737, 754–891, and 1018–1149; these read LELE…REKT, EEEE…AAEK, LGSS…MNSQ, TKQP…TPEI, and TAPL…PVGA. Residues 152–189 show a composition bias toward basic and acidic residues; sequence EESKKAEEVSQHREKSPEESRGRELDPVPEPEAFRADS. Over residues 197-211 the composition is skewed to polar residues; that stretch reads SESTEGLQGQPSAQE. Serine 229 bears the Phosphoserine mark. Polar residues predominate over residues 247–256; the sequence is ESRTGNSSPA. The span at 317–330 shows a compositional bias: acidic residues; the sequence is EEEEEVEEDADSSD. The span at 338-368 shows a compositional bias: basic and acidic residues; sequence SDKDEKVPGKPMIEKYLTDKDPNLSEEDKVE. Residue asparagine 360 is glycosylated (N-linked (GlcNAc...) asparagine). Residues 420 to 430 are compositionally biased toward acidic residues; it reads DSEDEGDDLFV. Basic and acidic residues-rich tracts occupy residues 431–442 and 451–461; these read EEPKTNDVKDSE and GEEKDIQESRK. The N-linked (GlcNAc...) asparagine glycan is linked to asparagine 631. The segment covering 661-677 has biased composition (basic and acidic residues); the sequence is EDGTDAEQARAIRRPQE. The segment covering 692-701 has biased composition (acidic residues); the sequence is DEEEEEEEGD. The segment covering 715–726 has biased composition (polar residues); the sequence is VSAQQSRENSPS. The span at 791–800 shows a compositional bias: basic and acidic residues; that stretch reads EESHLADMRA. Serine 856 is subject to Phosphoserine. Over residues 1030–1039 the composition is skewed to basic and acidic residues; sequence GWARPGEERQ. Composition is skewed to polar residues over residues 1040-1054 and 1115-1127; these read PPQQDSLPQENTGDL and QPVTGYTSTSEVS. Positions 1128 to 1137 are enriched in basic and acidic residues; it reads QKPDTKKDID. Residues 1172 to 1192 lie within the membrane without spanning it; it reads AFGSLYAFILYLSKMLLATLP. The Lumenal portion of the chain corresponds to 1193–1202; the sequence is DNVQPGPDFY. A helical membrane pass occupies residues 1203 to 1223; it reads GLPWQPVIITAVLGIVSFAIF. Over 1224–1930 the chain is Cytoplasmic; sequence SWRTILVVKS…DRSQASKPTP (707 aa). 2 coiled-coil regions span residues 1236–1329 and 1359–1422; these read YQVT…KNQD and LNEA…EIAL. The mediates interaction with MIA2 stretch occupies residues 1238–1677; that stretch reads VTEKQISEKL…VIVKPMPGRP (440 aa). The disordered stretch occupies residues 1447 to 1472; the sequence is ESEDPDKGGNESDDLANGETGGDRSE. Serine 1458 is modified (phosphoserine). Positions 1514 to 1662 form a coiled coil; sequence NLEDQIKKLE…LLEMTQKMAM (149 aa). Disordered stretches follow at residues 1669-1796, 1801-1820, and 1840-1930; these read IVKP…VPLM, PPPIRYGPPPQLCGGPFGPR, and APGV…KPTP. Residues 1677–1694 show a composition bias toward polar residues; it reads PNTQNPPRRGLLSQNGSF. Residues serine 1693 and serine 1705 each carry the phosphoserine modification. The span at 1706–1715 shows a compositional bias: pro residues; that stretch reads PPLPAEPPGR. Residues 1722–1738 are compositionally biased toward basic and acidic residues; sequence SRRDTPRSEFGSLDRHL. A phosphoserine mark is found at serine 1733, serine 1754, serine 1766, and serine 1770. Low complexity predominate over residues 1760–1773; that stretch reads PVVNSSSRSSSPAK. The segment at 1776 to 1930 is proline-rich domain (PRD); mediates interaction with the COPII coat subunits SEC23A and SEC23B; sequence DEGKVNMAPK…DRSQASKPTP (155 aa). Over residues 1801 to 1811 the composition is skewed to pro residues; sequence PPPIRYGPPPQ. Arginine 1805 carries the post-translational modification Asymmetric dimethylarginine. Positions 1809-1869 are SEC16A-interacting region (SIR); required for its localization to endoplasmic reticulum exit sites and for its interaction with SEC16A; that stretch reads PPQLCGGPFG…GHTPFRPPGS (61 aa). The segment covering 1846 to 1858 has biased composition (basic and acidic residues); that stretch reads GKRDLPLDPREFL. The span at 1881 to 1898 shows a compositional bias: pro residues; sequence RLPPPTHGPQEYPPPPPA. Serine 1915 carries the post-translational modification Phosphoserine. Polar residues predominate over residues 1915–1930; sequence SPSSVQDRSQASKPTP.

Belongs to the MIA/OTOR family. Tango1 subfamily. As to quaternary structure, interacts with MIA2. Interacts (via SH3 domain) with COL7A1. Interacts with the COPII coat subunits SEC23A, SEC23B and maybe SEC24C. May interact with APOB and MIA2. Interacts with SEC16A.

It is found in the endoplasmic reticulum membrane. In terms of biological role, plays a role in the transport of cargos that are too large to fit into COPII-coated vesicles and require specific mechanisms to be incorporated into membrane-bound carriers and exported from the endoplasmic reticulum. This protein is required for collagen VII (COL7A1) secretion by loading COL7A1 into transport carriers. It may participate in cargo loading of COL7A1 at endoplasmic reticulum exit sites by binding to COPII coat subunits Sec23/24 and guiding SH3-bound COL7A1 into a growing carrier. Does not play a role in global protein secretion and is apparently specific to COL7A1 cargo loading. However, it may participate in secretion of other proteins in cells that do not secrete COL7A1. It is also specifically required for the secretion of lipoproteins by participating in their export from the endoplasmic reticulum. Required for correct assembly of COPII coat components at endoplasmic reticulum exit sites (ERES) and for the localization of SEC16A and membrane-bound ER-resident complexes consisting of MIA2 and PREB/SEC12 to ERES. This Mus musculus (Mouse) protein is Transport and Golgi organization protein 1 homolog.